The chain runs to 239 residues: Fatty acid metabolism regulator protein (239 aa).

In terms of domain architecture, HTH gntR-type spans 6–74 (QSPAGFAEEY…HGKPTKVNNF (69 aa)). The H-T-H motif DNA-binding region spans 34–53 (ERELSELIGVTRTTLREVLQ).

Homodimer.

It is found in the cytoplasm. Multifunctional regulator of fatty acid metabolism. This is Fatty acid metabolism regulator protein from Proteus mirabilis (strain HI4320).